Consider the following 174-residue polypeptide: Gamma-crystallin C (174 aa).

Beta/gamma crystallin 'Greek key' domains follow at residues 2-40 (GKIT…RVDS) and 41-83 (GCWM…RLIP). The residue at position 23 (Cys23) is an S-methylcysteine. The segment at 84–87 (HTGS) is connecting peptide. Beta/gamma crystallin 'Greek key' domains are found at residues 88-128 (HRMR…HVLE) and 129-171 (GCWV…RRVV).

Belongs to the beta/gamma-crystallin family.

Functionally, crystallins are the dominant structural components of the vertebrate eye lens. In Rattus norvegicus (Rat), this protein is Gamma-crystallin C (Crygc).